Consider the following 323-residue polypeptide: Transcription initiation factor IIB 7 (323 aa).

The segment covering 1–16 has biased composition (basic and acidic residues); the sequence is MTRSTRQRERETAAKQ. Positions 1-35 are disordered; that stretch reads MTRSTRQRERETAAKQEEEEDSEEGVRECPECGSD. The TFIIB-type zinc finger occupies 24 to 56; sequence EGVRECPECGSDNLVKSSDRAELVCNDCGLVVE. Cys-29, Cys-32, Cys-48, and Cys-51 together coordinate Zn(2+). 2 repeat units span residues 142 to 225 and 236 to 317.

This sequence belongs to the TFIIB family.

Its function is as follows. Stabilizes TBP binding to an archaeal box-A promoter. Also responsible for recruiting RNA polymerase II to the pre-initiation complex (DNA-TBP-TFIIB). The polypeptide is Transcription initiation factor IIB 7 (Halobacterium salinarum (strain ATCC 700922 / JCM 11081 / NRC-1) (Halobacterium halobium)).